A 545-amino-acid chain; its full sequence is Tyrosine decarboxylase 2 (545 aa).

The segment covering 23-44 (GYTNGNGHTNGNGNYNGNGHVN) has biased composition (gly residues). Positions 23-45 (GYTNGNGHTNGNGNYNGNGHVNG) are disordered. L-tyrosine is bound by residues His245 and His360. The residue at position 361 (Lys361) is an N6-(pyridoxal phosphate)lysine. Tyr390 lines the L-tyrosine pocket.

The protein belongs to the group II decarboxylase family. In terms of assembly, homotetramer. Pyridoxal 5'-phosphate serves as cofactor. In terms of tissue distribution, expressed specifically in flowers.

It localises to the cytoplasm. The catalysed reaction is L-tyrosine + H(+) = tyramine + CO2. In terms of biological role, converts tyrosine into tyramine, a precursor of isoquinoline alkaloids and various amides. This Arabidopsis thaliana (Mouse-ear cress) protein is Tyrosine decarboxylase 2.